The following is an 864-amino-acid chain: N-alpha-acetyltransferase 16, NatA auxiliary subunit (864 aa).

TPR repeat units follow at residues 46–79, 80–113, 148–184, 224–257, 374–407, 408–441, and 485–514; these read GETL…DVRS, HVCW…DKDN, RASW…PPNK, LLVE…NAEN, IWVQ…TPTL, IELF…DTAD, and MWFE…VERH. The disordered stretch occupies residues 594 to 646; the sequence is KMLSKQRRAQKKAKVEEERKHTERERQQKNQKKKREEEEEVTSGHKEELIPEK. Basic residues predominate over residues 595-605; sequence MLSKQRRAQKK. Composition is skewed to basic and acidic residues over residues 606–621 and 635–646; these read AKVE…ERQQ and TSGHKEELIPEK.

As to quaternary structure, component of the N-terminal acetyltransferase A (NatA) complex composed of NAA10 and NAA16. Highest levels in the kidney and testes. Moderate expression in the liver, thymus and skin.

Functionally, auxillary subunit of the N-terminal acetyltransferase A (NatA) complex which displays alpha (N-terminal) acetyltransferase activity. In Mus musculus (Mouse), this protein is N-alpha-acetyltransferase 16, NatA auxiliary subunit (Naa16).